Reading from the N-terminus, the 339-residue chain is Ketol-acid reductoisomerase (NADP(+)) (339 aa).

The KARI N-terminal Rossmann domain occupies 1-182; the sequence is MRVYYDRDAD…GGGRAGIIET (182 aa). Residues 24-27, Arg48, Ser51, Ser53, and 83-86 contribute to the NADP(+) site; these read YGSQ and DELQ. His108 is a catalytic residue. Gly134 is a binding site for NADP(+). The KARI C-terminal knotted domain occupies 183–328; sequence TFKEECETDL…ERLRAMMPWI (146 aa). Mg(2+) contacts are provided by Asp191, Glu195, Glu227, and Glu231. Ser252 is a binding site for substrate.

This sequence belongs to the ketol-acid reductoisomerase family. Mg(2+) is required as a cofactor.

It carries out the reaction (2R)-2,3-dihydroxy-3-methylbutanoate + NADP(+) = (2S)-2-acetolactate + NADPH + H(+). It catalyses the reaction (2R,3R)-2,3-dihydroxy-3-methylpentanoate + NADP(+) = (S)-2-ethyl-2-hydroxy-3-oxobutanoate + NADPH + H(+). It participates in amino-acid biosynthesis; L-isoleucine biosynthesis; L-isoleucine from 2-oxobutanoate: step 2/4. Its pathway is amino-acid biosynthesis; L-valine biosynthesis; L-valine from pyruvate: step 2/4. Its function is as follows. Involved in the biosynthesis of branched-chain amino acids (BCAA). Catalyzes an alkyl-migration followed by a ketol-acid reduction of (S)-2-acetolactate (S2AL) to yield (R)-2,3-dihydroxy-isovalerate. In the isomerase reaction, S2AL is rearranged via a Mg-dependent methyl migration to produce 3-hydroxy-3-methyl-2-ketobutyrate (HMKB). In the reductase reaction, this 2-ketoacid undergoes a metal-dependent reduction by NADPH to yield (R)-2,3-dihydroxy-isovalerate. The protein is Ketol-acid reductoisomerase (NADP(+)) of Methylobacterium nodulans (strain LMG 21967 / CNCM I-2342 / ORS 2060).